A 1186-amino-acid chain; its full sequence is Probable inactive serine/threonine-protein kinase DDB_G0293184 (1186 aa).

Over residues 1–12 the composition is skewed to acidic residues; sequence MEQEDQQYEEDS. 2 disordered regions span residues 1 to 55 and 99 to 122; these read MEQE…NNDS and MEQQQQQQHLQPPLSPNSASNTNF. 2 stretches are compositionally biased toward low complexity: residues 34-48 and 99-110; these read TTTEITTTTTTTTPT and MEQQQQQQHLQP. The Protein kinase domain maps to 173-437; the sequence is YESPPTLGKY…VHDLLRHPWL (265 aa). ATP is bound by residues 179–187 and Lys205; that span reads LGKYDKVIL. Disordered regions lie at residues 447–468 and 530–551; these read SSSSSSQAHPTVQSNNLNGNVN and YNNYNNNNNNNNNTNDNDNECG. Polar residues predominate over residues 453–468; that stretch reads QAHPTVQSNNLNGNVN. A compositionally biased stretch (low complexity) spans 530 to 545; the sequence is YNNYNNNNNNNNNTND. Positions 631-659 form a coiled coil; that stretch reads LKRTNQMANDLGRKYEILQSNIKRLEDYL. A compositionally biased stretch (polar residues) spans 766–784; the sequence is NNLDPSNNNESVNLSTSPG. Disordered regions lie at residues 766–911 and 959–988; these read NNLD…NGNN and ENKKHQKQKSLDSTNKQSPGSLGGAGGDVS. The segment covering 785 to 836 has biased composition (low complexity); the sequence is SLVNSNSNPSISNSLNNNNNNNNNNNNNNNGNPNVIITTNNNCNSNSNGNNI. The segment covering 847–896 has biased composition (basic and acidic residues); it reads KEVKEGKEIKEIKEPKEKDKDKEKDKDKEKDKDKEKDKDKEKEKDKDKEN. A coiled-coil region spans residues 875 to 909; sequence EKDKDKEKDKDKEKEKDKDKENNNNNNSNNNNNNG. Positions 897–911 are enriched in low complexity; the sequence is NNNNNSNNNNNNGNN. Over residues 969–978 the composition is skewed to polar residues; that stretch reads LDSTNKQSPG. The Rho-GAP domain maps to 1004 to 1186; it reads VRLDDLMTRE…LSFPKFNLSV (183 aa).

The protein belongs to the protein kinase superfamily. STE Ser/Thr protein kinase family.

The sequence is that of Probable inactive serine/threonine-protein kinase DDB_G0293184 from Dictyostelium discoideum (Social amoeba).